The sequence spans 534 residues: NAD(P)H-quinone oxidoreductase chain 4 2 (534 aa).

A run of 13 helical transmembrane segments spans residues 6-26 (FPWL…IPLL), 38-58 (WYSL…FWTS), 93-113 (LILL…PVTF), 117-137 (FFYF…AVQD), 138-158 (LLVF…LLAI), 171-191 (FILY…AMAF), 210-230 (IGFQ…KLPI), 245-265 (TAPV…YALF), 279-299 (FAPI…LTSF), 313-333 (ISHM…GLSG), 335-355 (MLQM…VGAT), 377-399 (MFAM…GFVA), and 419-439 (VVVI…LLSM).

Belongs to the complex I subunit 4 family.

It is found in the cellular thylakoid membrane. It carries out the reaction a plastoquinone + NADH + (n+1) H(+)(in) = a plastoquinol + NAD(+) + n H(+)(out). The enzyme catalyses a plastoquinone + NADPH + (n+1) H(+)(in) = a plastoquinol + NADP(+) + n H(+)(out). Its function is as follows. NDH-1 shuttles electrons from NAD(P)H, via FMN and iron-sulfur (Fe-S) centers, to quinones in the respiratory chain. The immediate electron acceptor for the enzyme in this species is believed to be plastoquinone. Couples the redox reaction to proton translocation (for every two electrons transferred, four hydrogen ions are translocated across the cytoplasmic membrane), and thus conserves the redox energy in a proton gradient. The chain is NAD(P)H-quinone oxidoreductase chain 4 2 from Synechococcus elongatus (strain ATCC 33912 / PCC 7942 / FACHB-805) (Anacystis nidulans R2).